The chain runs to 982 residues: Envelope glycoprotein gp160 (982 aa).

The signal sequence occupies residues Met1–Asn106. Topologically, residues Gln107–Tyr831 are extracellular. N-linked (GlcNAc...) asparagine; by host glycosylation is found at Asn140, Asn161, Asn206, Asn258, Asn298, Asn364, Asn381, Asn387, Asn403, Asn414, Asn435, Asn439, Asn470, Asn475, Asn481, Asn491, Asn501, Asn515, Asn527, Asn537, Asn542, Asn543, and Asn568. The tract at residues Gly657–Leu677 is fusion peptide. A coiled-coil region spans residues Arg689 to Val738. A glycan (N-linked (GlcNAc...) asparagine; by host) is linked at Asn697. Residues Leu723–Val738 form an immunosuppression region. 4 N-linked (GlcNAc...) asparagine; by host glycosylation sites follow: Asn764, Asn771, Asn787, and Asn821. The stretch at Glu779–Lys814 forms a coiled coil. The chain crosses the membrane as a helical span at residues Ile832 to Ile852. Topologically, residues Ser853–Leu982 are cytoplasmic. A lipid anchor (S-palmitoyl cysteine; by host) is attached at Cys855.

The mature envelope protein (Env) consists of a trimer of SU-TM heterodimers attached by noncovalent interactions or by a labile interchain disulfide bond. Post-translationally, specific enzymatic cleavages in vivo yield mature proteins. Envelope glycoproteins are synthesized as an inactive precursor that is N-glycosylated and processed likely by host cell furin or by a furin-like protease in the Golgi to yield the mature SU and TM proteins. The cleavage site between SU and TM requires the minimal sequence [KR]-X-[KR]-R. The transmembrane protein is palmitoylated.

The protein localises to the virion membrane. The protein resides in the host cell membrane. In terms of biological role, the surface protein (SU) attaches the virus to the host cell by binding to its receptor. This interaction triggers the refolding of the transmembrane protein (TM) and is thought to activate its fusogenic potential by unmasking its fusion peptide. Fusion occurs at the host cell plasma membrane. Its function is as follows. The transmembrane protein (TM) acts as a class I viral fusion protein. Under the current model, the protein has at least 3 conformational states: pre-fusion native state, pre-hairpin intermediate state, and post-fusion hairpin state. During viral and target cell membrane fusion, the coiled coil regions (heptad repeats) assume a trimer-of-hairpins structure, positioning the fusion peptide in close proximity to the C-terminal region of the ectodomain. The formation of this structure appears to drive apposition and subsequent fusion of viral and target cell membranes. Membranes fusion leads to delivery of the nucleocapsid into the cytoplasm. This Maedi visna virus (strain 1514) (MVV) protein is Envelope glycoprotein gp160 (env).